Reading from the N-terminus, the 207-residue chain is Large ribosomal subunit protein uL4 (207 aa).

The tract at residues 50–76 (KTKTVSEVSGTTKKPFKQKGTGNARQG) is disordered.

This sequence belongs to the universal ribosomal protein uL4 family. As to quaternary structure, part of the 50S ribosomal subunit.

Its function is as follows. One of the primary rRNA binding proteins, this protein initially binds near the 5'-end of the 23S rRNA. It is important during the early stages of 50S assembly. It makes multiple contacts with different domains of the 23S rRNA in the assembled 50S subunit and ribosome. Functionally, forms part of the polypeptide exit tunnel. The sequence is that of Large ribosomal subunit protein uL4 from Rickettsia canadensis (strain McKiel).